The chain runs to 104 residues: UPF0145 protein Hlac_1015 (104 aa).

It belongs to the UPF0145 family.

This is UPF0145 protein Hlac_1015 from Halorubrum lacusprofundi (strain ATCC 49239 / DSM 5036 / JCM 8891 / ACAM 34).